A 108-amino-acid chain; its full sequence is MGVQVETISPGDGRTFPKRGQTCVVHYTGMLEDGKKFDSSRDRNKPFKFTLGKQEVIRGWEEGVAQMSVGQRAKLIISSDYAYGATGHPGIIPPHATLVFDVELLKLE.

Residues 20-108 enclose the PPIase FKBP-type domain; sequence GQTCVVHYTG…VFDVELLKLE (89 aa). At lysine 53 the chain carries N6-acetyllysine; alternate. Lysine 53 carries the post-translational modification N6-succinyllysine; alternate.

Belongs to the FKBP-type PPIase family. FKBP1 subfamily. In terms of assembly, interacts with TGFBR1; prevents TGFBR1 phosphorylation by TGFBR2 and stabilizes it in the inactive conformation. Interacts with ACVR1B and SMAD7. Identified in a complex composed of RYR1, PDE4D, PKA, FKBP1A and protein phosphatase 1 (PP1). Interacts directly with RYR2 and RYR3. Interacts directly with RYR1. Interacts with GLMN; rapamycin and FK506 abolish the interaction with GLMN in a dose dependent manner.

It is found in the cytoplasm. The protein resides in the cytosol. Its subcellular location is the sarcoplasmic reticulum membrane. It carries out the reaction [protein]-peptidylproline (omega=180) = [protein]-peptidylproline (omega=0). Inhibited by both FK506 and rapamycin. In terms of biological role, keeps in an inactive conformation TGFBR1, the TGF-beta type I serine/threonine kinase receptor, preventing TGF-beta receptor activation in absence of ligand. Recruits SMAD7 to ACVR1B which prevents the association of SMAD2 and SMAD3 with the activin receptor complex, thereby blocking the activin signal. May modulate the RYR1 calcium channel activity. PPIases accelerate the folding of proteins. It catalyzes the cis-trans isomerization of proline imidic peptide bonds in oligopeptides. The chain is Peptidyl-prolyl cis-trans isomerase FKBP1A (Fkbp1a) from Mus musculus (Mouse).